Here is a 74-residue protein sequence, read N- to C-terminus: Large ribosomal subunit protein bL31 (74 aa).

The protein belongs to the bacterial ribosomal protein bL31 family. Type A subfamily. Part of the 50S ribosomal subunit.

Its function is as follows. Binds the 23S rRNA. The protein is Large ribosomal subunit protein bL31 of Chlorobaculum parvum (strain DSM 263 / NCIMB 8327) (Chlorobium vibrioforme subsp. thiosulfatophilum).